The following is a 343-amino-acid chain: Ion-translocating oxidoreductase complex subunit D (343 aa).

Helical transmembrane passes span 24-44 (VLLA…AGTL), 45-65 (YNLA…LAAR), 69-91 (LAFF…ALPP), and 124-144 (AMLG…SWPA). Thr171 is modified (FMN phosphoryl threonine). The next 5 membrane-spanning stretches (helical) occupy residues 197 to 217 (FGGA…LYLL), 221 to 241 (LITW…SLLF), 251 to 271 (GSPL…FIVT), 284 to 304 (LVFG…GGYP), and 305 to 325 (DAVA…DYYT).

Belongs to the NqrB/RnfD family. In terms of assembly, the complex is composed of six subunits: RnfA, RnfB, RnfC, RnfD, RnfE and RnfG. The cofactor is FMN.

It is found in the cell inner membrane. Functionally, part of a membrane-bound complex that couples electron transfer with translocation of ions across the membrane. The polypeptide is Ion-translocating oxidoreductase complex subunit D (Ectopseudomonas mendocina (strain ymp) (Pseudomonas mendocina)).